The primary structure comprises 579 residues: Carboxysome shell carbonic anhydrase (579 aa).

Residues 72-95 (GGGRVRSARDQRQPGWVRRDKGAT) form a disordered region. Residues 78–93 (SARDQRQPGWVRRDKG) show a composition bias toward basic and acidic residues. Cysteine 240 provides a ligand contact to Zn(2+). Residue aspartate 242 is the Proton acceptor of the active site. 2 residues coordinate Zn(2+): histidine 308 and cysteine 319.

This sequence belongs to the beta-class carbonic anhydrase family. CsoSCA subfamily. Homodimer. It depends on Zn(2+) as a cofactor.

The protein localises to the carboxysome. It carries out the reaction hydrogencarbonate + H(+) = CO2 + H2O. Inhibited by dithiothreitol, partially inhibited by acetatzolamide and cyanide. Reversible hydration of carbon dioxide. Essential for photosynthetic carbon dioxide fixation, supplies CO(2) to RuBisCO (ribulose bisphosphate carboxylase, cbbL-cbbS) in the carboxysome. The sequence is that of Carboxysome shell carbonic anhydrase from Parasynechococcus marenigrum (strain WH8102).